The primary structure comprises 454 residues: Tegument protein VP16 homolog (454 aa).

It belongs to the herpesviridae tegument protein VP16 protein family. Associates with the VP16-induced complex; binding to host HCFC1 activates VP16 for association with the octamer motif-binding host protein POU2F1, to form a multiprotein-DNA complex responsible for activating transcription of the viral immediate early genes.

The protein resides in the virion tegument. It localises to the host nucleus. In terms of biological role, transcriptional activator of immediate-early (IE) gene products (alpha genes). Acts as a key activator of lytic infection by initiating the lytic program through the assembly of the transcriptional regulatory VP16-induced complex composed of VP16 and two cellular factors, HCFC1 and POU2F1. VP16-induced complex represents a regulatory switch: when it is on, it promotes IE-gene expression and thus lytic infection, and when it is off, it limits IE-gene transcription favoring latent infection. Functionally, may play a role in the aggregation of tegument proteins around nucleocapsids during virus morphogenesis. The polypeptide is Tegument protein VP16 homolog (12) (Equine herpesvirus 4 (strain 1942) (EHV-4)).